We begin with the raw amino-acid sequence, 186 residues long: Akirin-1 (186 aa).

Residues 1–64 are disordered; the sequence is MACGATLKRS…PLPQLGGDRR (64 aa). The Nuclear localization signal motif lies at 22–27; the sequence is PKRRRC. Positions 49 to 60 are enriched in low complexity; that stretch reads QQGQQQPLPQLG. An SYVS motif motif is present at residues 183–186; it reads SYVS.

The protein belongs to the akirin family.

The protein localises to the nucleus. Functionally, molecular adapter that acts as a bridge between proteins, and which is involved skeletal muscle development. Functions as a signal transducer for MSTN during skeletal muscle regeneration and myogenesis. The chain is Akirin-1 from Xenopus tropicalis (Western clawed frog).